The sequence spans 663 residues: MSRFIRASQRRTLLATLIAATLAQPLLAAESLDSKPASAITAAKNAEVLKNLPFADREEFEAAKRGLIAPFSGQIKNAEGQVVWDMGAYQFLNDKDAADTVNPSLWHQAQLNNIAGLFEVMPKLYQVRGLDPANMTIIEGDSGLVLIDTLTTAETARAALDLYFQHRPKKPIVAVVYSHSHIDHFGGARGIIDEADVKAGKVKVFAPSGFMEHAVSENILAGTAMARRGQYQSGVMVPRGAQAQVDSGLFKTTATNATNTLVAPNVLIEKPYERHTVDGVELEFQLTLGSEAPSDMNIYLPQFKVLNTADNAPPAMHNLLTPRGAEVRDAKAWAGYIDASLEKYGDRTDVLIQQHNWPVWGGDKVRTYLADQRDMYAFLNNRALNLMNKGLTLHEIAAEVSKLPGELDRKWYLRSYYGALSTNLRAVYQRYLGFYDGNPANLDPFPPVEAGKRYVEAMGGADAVLKQMRAAIDKGDYRWAVQLGNHLVFADPANKDARALQADAMEQLGYQTENALWRNMYMTGAMELRHGVPTYDSRGKSEMGRALTPDMFFDLLAIRLDTDKAVGHDMTLNWVFEDLKQDIALTLRNGVLTQRVGSLNPKADVTVKLTKPTLDQIAARKLDLPTAIKQGTVKLDGDGKKLGEFFGLLDSFSPKFNIVEPLE.

The signal sequence occupies residues 1 to 28 (MSRFIRASQRRTLLATLIAATLAQPLLA). Zn(2+) is bound by residues H179, H181, D183, and H184. A sulfate-binding site is contributed by Q232. 2 residues coordinate Zn(2+): E291 and D310. Sulfate-binding positions include 318–323 (NLLTPR) and R328. H355 serves as a coordination point for Zn(2+). A sulfate-binding site is contributed by Y417.

Belongs to the metallo-beta-lactamase superfamily. Type III sulfatase family. In terms of assembly, homodimer.

The enzyme catalyses an (R)-secondary-alkyl sulfate + H2O = an (S)-secondary-alcohol + sulfate.. Alkylsulfatase that catalyzes the enantioselective hydrolysis of secondary-alkylsulfates with strict inversion of configuration, leading to the formation of homochiral (S)-configurated alcohols and nonreacted sulfate esters. The substrate spectrum includes a range of linear, branched or cyclic sec-alkylsulfates. Can use sec-alkylsulfate esters bearing aromatic, olefinic and acetylenic moieties. Acts by cleaving the C-O bond, resulting in inversion at the carbon. This is (R)-specific secondary-alkylsulfatase from Pseudomonas sp.